Reading from the N-terminus, the 61-residue chain is Large ribosomal subunit protein uL30 (61 aa).

It belongs to the universal ribosomal protein uL30 family. As to quaternary structure, part of the 50S ribosomal subunit.

This Chlorobium phaeobacteroides (strain DSM 266 / SMG 266 / 2430) protein is Large ribosomal subunit protein uL30.